A 151-amino-acid chain; its full sequence is Cytochrome c-type biogenesis protein CcmE (151 aa).

The Cytoplasmic segment spans residues Met-1–Arg-8. The chain crosses the membrane as a helical; Signal-anchor for type II membrane protein span at residues Leu-9–Ala-29. Residues Leu-30–Gly-151 lie on the Periplasmic side of the membrane. Positions 124 and 128 each coordinate heme.

It belongs to the CcmE/CycJ family.

The protein resides in the cell inner membrane. Functionally, heme chaperone required for the biogenesis of c-type cytochromes. Transiently binds heme delivered by CcmC and transfers the heme to apo-cytochromes in a process facilitated by CcmF and CcmH. The protein is Cytochrome c-type biogenesis protein CcmE of Pseudomonas fluorescens (strain SBW25).